Consider the following 75-residue polypeptide: Acyl carrier protein (75 aa).

One can recognise a Carrier domain in the interval 1–75 (MIFEKVRDII…DVVEYLSNLE (75 aa)). Residue Ser-35 is modified to O-(pantetheine 4'-phosphoryl)serine.

The protein belongs to the acyl carrier protein (ACP) family. 4'-phosphopantetheine is transferred from CoA to a specific serine of apo-ACP by AcpS. This modification is essential for activity because fatty acids are bound in thioester linkage to the sulfhydryl of the prosthetic group.

The protein localises to the cytoplasm. It participates in lipid metabolism; fatty acid biosynthesis. Functionally, carrier of the growing fatty acid chain in fatty acid biosynthesis. In Thermoanaerobacter pseudethanolicus (strain ATCC 33223 / 39E) (Clostridium thermohydrosulfuricum), this protein is Acyl carrier protein.